We begin with the raw amino-acid sequence, 154 residues long: Transcriptional repressor NrdR (154 aa).

A zinc finger lies at 3–34; it reads CPFCGANDTKVIDSRLVAEGEQVRRRRECVAC. In terms of domain architecture, ATP-cone spans 49–139; it reads PRLIKQDGTR…VYRRFQDLDE (91 aa).

It belongs to the NrdR family. The cofactor is Zn(2+).

In terms of biological role, negatively regulates transcription of bacterial ribonucleotide reductase nrd genes and operons by binding to NrdR-boxes. In Pseudomonas putida (strain ATCC 700007 / DSM 6899 / JCM 31910 / BCRC 17059 / LMG 24140 / F1), this protein is Transcriptional repressor NrdR.